A 105-amino-acid polypeptide reads, in one-letter code: Thioredoxin (105 aa).

The Thioredoxin domain maps to 1–105 (MVNNVTDSSF…SLLDWINKSI (105 aa)). Cys-30 and Cys-33 are oxidised to a cystine.

It belongs to the thioredoxin family.

Functionally, component of the thioredoxin-thioredoxin reductase system. Participates in various redox reactions through the reversible oxidation of its active center dithiol to a disulfide and catalyzes dithiol-disulfide exchange reactions. In Rickettsia prowazekii (strain Madrid E), this protein is Thioredoxin (trxA).